The sequence spans 136 residues: MSLIKEFKAFASRGNVIDMAVGIIIGAAFGKIVSSFVADIIMPPIGIILGGVNFSDLSIVLQAAQGDAPAVVIAYGKFIQTVIDFTIIAFAIFMGLKAINSLKRKQEEAPKAPPAPTKDQELLSEIRDLLKAQQEK.

2 helical membrane-spanning segments follow: residues 9–29 (AFAS…GAAF) and 79–99 (IQTV…LKAI).

Belongs to the MscL family. In terms of assembly, homopentamer.

It localises to the cell inner membrane. In terms of biological role, channel that opens in response to stretch forces in the membrane lipid bilayer. May participate in the regulation of osmotic pressure changes within the cell. In Shewanella sp. (strain MR-4), this protein is Large-conductance mechanosensitive channel.